We begin with the raw amino-acid sequence, 635 residues long: Very-long-chain aldehyde decarbonylase GL1-6 (635 aa).

4 helical membrane passes run 46–66 (LLNFMVFPMLLLRLLYGQLWI), 100–120 (IILTALVFYLVSATMPQAQVA), 127–147 (GMVVTAVLHAGPVEFLYYWLH), and 183–203 (VVYFVLLAIPILSTVATGTVS). The Fatty acid hydroxylase domain maps to 139–273 (VEFLYYWLHR…MPVYDYIYGT (135 aa)).

It belongs to the sterol desaturase family. In terms of assembly, homodimer.

The protein resides in the endoplasmic reticulum membrane. It catalyses the reaction a long-chain fatty aldehyde + 2 NADPH + O2 + H(+) = a long-chain alkane + formate + 2 NADP(+) + H2O. Its function is as follows. Aldehyde decarbonylase involved in the conversion of aldehydes to alkanes. Core component of a very-long-chain alkane synthesis complex. The polypeptide is Very-long-chain aldehyde decarbonylase GL1-6 (Oryza sativa subsp. indica (Rice)).